The chain runs to 135 residues: MKKGFLAAGVFAAVAFASGAALAEGDAAAGEKVSKKCLACHTFDQGGANKVGPNLFGVFENTAAHKDDYAYSESYTEMKAKGLTWTEANLAAYVKDPKAFVLEKSGDPKAKSKMTFKLTKDDEIENVIAYLKTLK.

An N-terminal signal peptide occupies residues 1–23; sequence MKKGFLAAGVFAAVAFASGAALA. The heme c site is built by Cys37, Cys40, His41, and Met114.

The protein belongs to the cytochrome c family. Post-translationally, binds 1 heme c group covalently per subunit.

In terms of biological role, cytochrome c2 is found mainly in purple, non-sulfur, photosynthetic bacteria where it functions as the electron donor to the oxidized bacteriochlorophyll in the photophosphorylation pathway. However, it may also have a role in the respiratory chain and is found in some non-photosynthetic bacteria. This Rhodospirillum rubrum (strain ATCC 11170 / ATH 1.1.1 / DSM 467 / LMG 4362 / NCIMB 8255 / S1) protein is Cytochrome c2 (cycA).